Here is a 195-residue protein sequence, read N- to C-terminus: Nucleoid occlusion factor SlmA (195 aa).

In terms of domain architecture, HTH tetR-type spans 6-66 (PSRRESILQA…ALIEFAEEAV (61 aa)). The H-T-H motif DNA-binding region spans 29–48 (TTAGLAKTVGVTEAALYRHF). Residues 118-138 (RKRASQFFERLETQIRQALKE) are a coiled coil.

This sequence belongs to the nucleoid occlusion factor SlmA family. Homodimer. Interacts with FtsZ.

The protein localises to the cytoplasm. It is found in the nucleoid. Required for nucleoid occlusion (NO) phenomenon, which prevents Z-ring formation and cell division over the nucleoid. Acts as a DNA-associated cell division inhibitor that binds simultaneously chromosomal DNA and FtsZ, and disrupts the assembly of FtsZ polymers. SlmA-DNA-binding sequences (SBS) are dispersed on non-Ter regions of the chromosome, preventing FtsZ polymerization at these regions. In Marinobacter nauticus (strain ATCC 700491 / DSM 11845 / VT8) (Marinobacter aquaeolei), this protein is Nucleoid occlusion factor SlmA.